Consider the following 168-residue polypeptide: Xanthine-guanine phosphoribosyltransferase (168 aa).

5-phospho-alpha-D-ribose 1-diphosphate-binding positions include 46–47 (RG) and 101–109 (DDLVDSGVT). A Mg(2+)-binding site is contributed by Asp-102. Asp-105 contacts guanine. Residues Asp-105 and Val-148 each coordinate xanthine. Residues 105–109 (DSGVT) and 147–148 (WV) each bind GMP.

Belongs to the purine/pyrimidine phosphoribosyltransferase family. XGPT subfamily. In terms of assembly, homotetramer. Requires Mg(2+) as cofactor.

It is found in the cell inner membrane. The enzyme catalyses GMP + diphosphate = guanine + 5-phospho-alpha-D-ribose 1-diphosphate. The catalysed reaction is XMP + diphosphate = xanthine + 5-phospho-alpha-D-ribose 1-diphosphate. It carries out the reaction IMP + diphosphate = hypoxanthine + 5-phospho-alpha-D-ribose 1-diphosphate. It participates in purine metabolism; GMP biosynthesis via salvage pathway; GMP from guanine: step 1/1. The protein operates within purine metabolism; XMP biosynthesis via salvage pathway; XMP from xanthine: step 1/1. Functionally, purine salvage pathway enzyme that catalyzes the transfer of the ribosyl-5-phosphate group from 5-phospho-alpha-D-ribose 1-diphosphate (PRPP) to the N9 position of the 6-oxopurines guanine and xanthine to form the corresponding ribonucleotides GMP (guanosine 5'-monophosphate) and XMP (xanthosine 5'-monophosphate), with the release of PPi. To a lesser extent, also acts on hypoxanthine. The protein is Xanthine-guanine phosphoribosyltransferase of Gluconobacter oxydans (strain 621H) (Gluconobacter suboxydans).